We begin with the raw amino-acid sequence, 249 residues long: Protein LicA homolog (249 aa).

This sequence belongs to the peptidase S49 family.

This Metamycoplasma hominis (strain ATCC 23114 / DSM 25592 / NBRC 14850 / NCTC 10111 / PG21) (Mycoplasma hominis) protein is Protein LicA homolog (licA).